Consider the following 542-residue polypeptide: Chaperonin GroEL (542 aa).

Residues 29-32 (TLGP), 86-90 (DGTTT), Gly-413, 476-478 (NAA), and Asp-492 contribute to the ATP site.

The protein belongs to the chaperonin (HSP60) family. Forms a cylinder of 14 subunits composed of two heptameric rings stacked back-to-back. Interacts with the co-chaperonin GroES.

It localises to the cytoplasm. It carries out the reaction ATP + H2O + a folded polypeptide = ADP + phosphate + an unfolded polypeptide.. Its function is as follows. Together with its co-chaperonin GroES, plays an essential role in assisting protein folding. The GroEL-GroES system forms a nano-cage that allows encapsulation of the non-native substrate proteins and provides a physical environment optimized to promote and accelerate protein folding. This is Chaperonin GroEL from Bacillus cytotoxicus (strain DSM 22905 / CIP 110041 / 391-98 / NVH 391-98).